The following is a 280-amino-acid chain: Protein synthesis inhibitor II (280 aa).

Alanine 1 is subject to N-acetylalanine. Glutamate 174 is an active-site residue.

The protein belongs to the ribosome-inactivating protein family. Type 1 RIP subfamily.

Its subcellular location is the cytoplasm. It catalyses the reaction Endohydrolysis of the N-glycosidic bond at one specific adenosine on the 28S rRNA.. Functionally, inhibits the elongation phase of protein synthesis. It inactivates fungal ribosomes even more effectively than mammalian ribosomes and is thought to function as a constitutive antifungal agent in plants. The protein is Protein synthesis inhibitor II (RIP30A) of Hordeum vulgare (Barley).